A 473-amino-acid chain; its full sequence is UDP-glycosyltransferase 71B1 (473 aa).

The active-site Proton acceptor is H15. Residue H15 participates in an anthocyanidin binding. Catalysis depends on D110, which acts as the Charge relay. Residues T132, A342, Q344, H359, W362, N363, S364, and E367 each coordinate UDP-alpha-D-glucose. Residue A382 participates in an anthocyanidin binding. UDP-alpha-D-glucose-binding residues include E383 and Q384.

It belongs to the UDP-glycosyltransferase family.

It carries out the reaction a flavonol + UDP-alpha-D-glucose = a flavonol 3-O-beta-D-glucoside + UDP + H(+). Functionally, possesses quercetin 3-O-glucosyltransferase activity in vitro. Also active in vitro on benzoates and benzoate derivatives. The protein is UDP-glycosyltransferase 71B1 (UGT71B1) of Arabidopsis thaliana (Mouse-ear cress).